Reading from the N-terminus, the 173-residue chain is Probable xanthine dehydrogenase subunit E (173 aa).

The region spanning 14 to 90 is the 2Fe-2S ferredoxin-type domain; the sequence is EQFRMTVNGQ…GHSITTIEGL (77 aa). Residues C52, C57, C60, C72, C110, C113, C145, and C147 each contribute to the [2Fe-2S] cluster site.

Could be composed of four subunits: PucA, PucC, PucD and PucE. [2Fe-2S] cluster serves as cofactor.

The enzyme catalyses xanthine + NAD(+) + H2O = urate + NADH + H(+). It carries out the reaction hypoxanthine + NAD(+) + H2O = xanthine + NADH + H(+). It functions in the pathway purine metabolism; hypoxanthine degradation; urate from hypoxanthine: step 1/2. The protein operates within purine metabolism; hypoxanthine degradation; urate from hypoxanthine: step 2/2. In terms of biological role, oxidizes hypoxanthine and xanthine to uric acid. The sequence is that of Probable xanthine dehydrogenase subunit E (pucE) from Bacillus subtilis (strain 168).